Consider the following 1115-residue polypeptide: Eukaryotic translation initiation factor 2-alpha kinase 3 (1115 aa).

The signal sequence occupies residues 1–29 (MERATGPGSLARTLLLPLLLGLVAGTVTA). Topologically, residues 30–514 (RRTSDLLAPT…PNYKNIRKKD (485 aa)) are extracellular. The tract at residues 74 to 101 (SEALPAAAGEQEAREPEPEPEEEPDIRP) is disordered. An N-linked (GlcNAc...) asparagine glycan is attached at Asn-259. A helical transmembrane segment spans residues 515 to 535 (PVLLLHWWKEIVGTIVFCIVA). The Cytoplasmic segment spans residues 536-1115 (TTFIVRRLFH…SSPHSPLPSN (580 aa)). The region spanning 593 to 1076 (FEPIQCMGRG…AASIIENAIF (484 aa)) is the Protein kinase domain. 599-607 (MGRGGFGVV) contacts ATP. A Phosphotyrosine; by autocatalysis modification is found at Tyr-619. Lys-622 contributes to the ATP binding site. Residues 647-887 (EHPGIVRYFN…SPKVYLYIQM (241 aa)) form an insert loop region. A Phosphoserine modification is found at Ser-715. Phosphothreonine is present on Thr-802. Disordered regions lie at residues 807 to 832 (VFEDSGCDNASSKEEPRMNQPPVGNH) and 841 to 860 (RHSGSKSSEPTVSVSPSRPT). The segment covering 845–860 (SKSSEPTVSVSPSRPT) has biased composition (polar residues). Asp-936 acts as the Proton acceptor in catalysis. The residue at position 981 (Thr-981) is a Phosphothreonine. Residues 1087–1115 (LRQRSRSMSSPGAKHSRHSSSPHSPLPSN) are disordered. Ser-1093 carries the phosphoserine modification.

Belongs to the protein kinase superfamily. Ser/Thr protein kinase family. GCN2 subfamily. As to quaternary structure, forms dimers with HSPA5/BIP in resting cells. Homotetramerizes in response to endoplasmic reticulum (ER) stress, leading to its activation. Interacts with HSP90B1/GRP94. Interacts with DNAJC3; inhibiting EIF2AK3/PERK activity. Interacts with ATAD3A; ATAD3A and EIF2S1/eIF-2-alpha occupy a common binding site within the cytoplasmic loop of EIF2AK3/PERK, leading to prevent EIF2AK3/PERK association with its substrate EIF2S1/eIF-2-alpha. Interacts with MFN2. Interacts with TMEM33. Interacts with PDIA6. Interacts with LACC1. Oligomerization of the N-terminal ER luminal domain by ER stress promotes EIF2AK3/PERK trans-autophosphorylation of the C-terminal cytoplasmic kinase domain at multiple residues including Thr-981 on the kinase activation loop. Autophosphorylated at Tyr-619 following endoplasmic reticulum stress, leading to activate its activity. Dephosphorylated at Tyr-619 by PTPN1/PTP1B, leading to inactivate its enzyme activity. Phosphorylation at Thr-802 by AKT (AKT1, AKT2 and/or AKT3) inactivates EIF2AK3/PERK. In terms of processing, ADP-ribosylated by PARP16 upon ER stress, which increases kinase activity.

It is found in the endoplasmic reticulum membrane. It carries out the reaction L-seryl-[protein] + ATP = O-phospho-L-seryl-[protein] + ADP + H(+). The catalysed reaction is L-threonyl-[protein] + ATP = O-phospho-L-threonyl-[protein] + ADP + H(+). The enzyme catalyses L-tyrosyl-[protein] + ATP = O-phospho-L-tyrosyl-[protein] + ADP + H(+). Inhibited by HSPA5/BIP in absence of stress. Perturbation in protein folding in the endoplasmic reticulum (ER) promotes reversible dissociation from HSPA5/BIP and oligomerization, resulting in trans-autophosphorylation and kinase activity induction. Inactivated following phosphorylation at Thr-802 by AKT (AKT1, AKT2 and/or AKT3). Inhibited by ATAD3A at mitochondria-endoplasmic reticulum contact sites, providing a safe haven for mitochondrial protein translation during ER stress. Its function is as follows. Metabolic-stress sensing protein kinase that phosphorylates the alpha subunit of eukaryotic translation initiation factor 2 (EIF2S1/eIF-2-alpha) in response to various stress, such as unfolded protein response (UPR). Key effector of the integrated stress response (ISR) to unfolded proteins: EIF2AK3/PERK specifically recognizes and binds misfolded proteins, leading to its activation and EIF2S1/eIF-2-alpha phosphorylation. EIF2S1/eIF-2-alpha phosphorylation in response to stress converts EIF2S1/eIF-2-alpha in a global protein synthesis inhibitor, leading to a global attenuation of cap-dependent translation, while concomitantly initiating the preferential translation of ISR-specific mRNAs, such as the transcriptional activators ATF4 and QRICH1, and hence allowing ATF4- and QRICH1-mediated reprogramming. The EIF2AK3/PERK-mediated unfolded protein response increases mitochondrial oxidative phosphorylation by promoting ATF4-mediated expression of COX7A2L/SCAF1, thereby increasing formation of respiratory chain supercomplexes. In contrast to most subcellular compartments, mitochondria are protected from the EIF2AK3/PERK-mediated unfolded protein response due to EIF2AK3/PERK inhibition by ATAD3A at mitochondria-endoplasmic reticulum contact sites. In addition to EIF2S1/eIF-2-alpha, also phosphorylates NFE2L2/NRF2 in response to stress, promoting release of NFE2L2/NRF2 from the BCR(KEAP1) complex, leading to nuclear accumulation and activation of NFE2L2/NRF2. Serves as a critical effector of unfolded protein response (UPR)-induced G1 growth arrest due to the loss of cyclin-D1 (CCND1). Involved in control of mitochondrial morphology and function. The polypeptide is Eukaryotic translation initiation factor 2-alpha kinase 3 (Bos taurus (Bovine)).